A 71-amino-acid polypeptide reads, in one-letter code: Translational regulator CsrA (71 aa).

The segment at 50–71 (RIRHEKDGDVPEAAPGQGADPQ) is disordered.

Belongs to the CsrA/RsmA family. As to quaternary structure, homodimer; the beta-strands of each monomer intercalate to form a hydrophobic core, while the alpha-helices form wings that extend away from the core.

It localises to the cytoplasm. In terms of biological role, a key translational regulator that binds mRNA to regulate translation initiation and/or mRNA stability. Mediates global changes in gene expression, shifting from rapid growth to stress survival by linking envelope stress, the stringent response and the catabolite repression systems. Usually binds in the 5'-UTR; binding at or near the Shine-Dalgarno sequence prevents ribosome-binding, repressing translation, binding elsewhere in the 5'-UTR can activate translation and/or stabilize the mRNA. Its function is antagonized by small RNA(s). The protein is Translational regulator CsrA of Halorhodospira halophila (strain DSM 244 / SL1) (Ectothiorhodospira halophila (strain DSM 244 / SL1)).